Here is a 147-residue protein sequence, read N- to C-terminus: 3-dehydroquinate dehydratase (147 aa).

Tyrosine 23 serves as the catalytic Proton acceptor. Substrate is bound by residues asparagine 74, histidine 80, and aspartate 87. Histidine 100 functions as the Proton donor in the catalytic mechanism. Residues 101–102 (IS) and arginine 111 contribute to the substrate site.

The protein belongs to the type-II 3-dehydroquinase family. As to quaternary structure, homododecamer.

The enzyme catalyses 3-dehydroquinate = 3-dehydroshikimate + H2O. The protein operates within metabolic intermediate biosynthesis; chorismate biosynthesis; chorismate from D-erythrose 4-phosphate and phosphoenolpyruvate: step 3/7. In terms of biological role, catalyzes a trans-dehydration via an enolate intermediate. The protein is 3-dehydroquinate dehydratase of Prochlorococcus marinus (strain MIT 9301).